We begin with the raw amino-acid sequence, 81 residues long: CLAVATA3/ESR (CLE)-related protein 12 (81 aa).

Residues 1-31 (MENSNKVPISKIGLIMLMIFSTFFMSPHARR) form the signal peptide. Residues 55-67 (KRSRTDLEDKAVP) show a composition bias toward basic and acidic residues. Residues 55-81 (KRSRTDLEDKAVPGDRLSPGGPNHIHN) are disordered. Hydroxyproline occurs at positions 73 and 76. The O-linked (Ara...) hydroxyproline glycan is linked to Pro76.

The protein belongs to the CLV3/ESR signal peptide family. The O-glycosylation (arabinosylation) of the hydroxyproline Pro-76 enhances binding affinity of the CLE12p peptide for its receptor. As to expression, expressed in young nodules throughout the central tissue. Expressed in the apical region of elongated nodules, corresponding to the meristematic and early infection zones.

It is found in the secreted. The protein resides in the extracellular space. Functionally, signaling peptide involved in the regulation of nodulation. Moves from root to shoot to function with the receptor kinase SUNN, in a signaling pathway that plays roles during cellular differentiation, both at the onset of nodulation, and later during nodule meristem development and subsequent homeostasis. Interacts with SUNN signaling to control nodule numbers. SUNN is involved in the autoregulation of nodulation (AON), a long distance systemic signaling from root to shoot and back again, which allows legumes to limit the number of root nodules formed based on available nitrogen and previous rhizobial colonization. This chain is CLAVATA3/ESR (CLE)-related protein 12, found in Medicago truncatula (Barrel medic).